The chain runs to 731 residues: MSIFDRMTTSKEAAMKYRQFCVSKKKEVWDALIYHAKYAKNIEKVYDMTTVLQRVQQECLMFALEKGVGQPDIRDAAELIFPLAMQKVVIKVLRPYFMSHFTNYRLAMYLPHRKIDHGIDLNQELWTPEKKEICGQYVQDFNPFVNELKTGILNANRHMNAALSVYIRELAATLVMHEKAAFDNELRCSMFQEIMESLRIWSDQVTMQDAFHLISDTIYKDVFQMLSKNAYEMIAVDFPVKFRSLITMKYCLLRTNNHGRVDFTNYLIDQVNTKLLVASVDTKDILKAYAACVESLREMDNSCVVMHKVCGVIREYLKRRPDTVQQIISYITSNKKNELEKDMSLQSKTVRSAMMDEEELKGVNDDFLPENMETLGWENWMPNPTDATVGDGAPGHQGVDVFNMLVSVYGSKELFVKEYRNLLAERLSSSDNKDPEFEKRYLDLLKLRFQYSELQHCEVMLRDVIHSLDIDKKFEDMSERSAGNYDVPIIPISACIISSHYWPKLETEKTEALMPQPLQAAMDVYQETYLDVKRDRKLEWLRSVGCVEVSINIDGVEVDRTIPNMYALLLFLFLEKETWTTAEVVEKMGMSVVVTRKRLEWLVKQGFICMNPIISSDTWTLTRNPSGISIVRPGTPDLEDDEDVEPEENSDMVDALEQYWGYTRNFIANHAPNGEVKAERMHRVYRMFGSPTSAGPTLDHVSAFLQRKVALGLLTCINGSYRIIQEKKDGE.

It belongs to the cullin family. In terms of assembly, the APC/C is probably composed of at least 12 subunits: apc-2, apc-10, apc-11, cdc-26, emb-1, emb-27, emb-30, mat-1, mat-2, mat-3, such-1 and gfi-3.

The protein operates within protein modification; protein ubiquitination. Functionally, probable component of the anaphase promoting complex/cyclosome (APC/C), a cell cycle-regulated ubiquitin ligase that controls progression through mitosis and the G1 phase of the cell cycle. The APC/C complex acts by mediating ubiquitination and subsequent degradation of target proteins. Developmental role in early embryogenesis and the metaphase to anaphase transition in meiosis and mitosis. This chain is Anaphase-promoting complex subunit 2, found in Caenorhabditis elegans.